A 640-amino-acid polypeptide reads, in one-letter code: Threonine--tRNA ligase (640 aa).

A TGS domain is found at 1-61 (MPAITLPDGS…DADARLRFIT (61 aa)). Positions 243 to 536 (DHRKIGRQMD…LIENCAGRFP (294 aa)) are catalytic. Zn(2+) contacts are provided by Cys-336, His-387, and His-513.

Belongs to the class-II aminoacyl-tRNA synthetase family. Homodimer. Requires Zn(2+) as cofactor.

Its subcellular location is the cytoplasm. It catalyses the reaction tRNA(Thr) + L-threonine + ATP = L-threonyl-tRNA(Thr) + AMP + diphosphate + H(+). Its function is as follows. Catalyzes the attachment of threonine to tRNA(Thr) in a two-step reaction: L-threonine is first activated by ATP to form Thr-AMP and then transferred to the acceptor end of tRNA(Thr). Also edits incorrectly charged L-seryl-tRNA(Thr). The sequence is that of Threonine--tRNA ligase from Acidiphilium cryptum (strain JF-5).